Reading from the N-terminus, the 54-residue chain is Large ribosomal subunit protein bL33B (54 aa).

It belongs to the bacterial ribosomal protein bL33 family.

This chain is Large ribosomal subunit protein bL33B, found in Myxococcus xanthus (strain DK1622).